A 472-amino-acid polypeptide reads, in one-letter code: MELRLYDTATREKRPFVPLHRNNVRMYVCGPTVYDFAHIGNARPVIVFDVLFRLLRHLYGAEHVTYVRNITDVDDKINARAARDFPGLPLNEAIRNVTELTERQFHEDVDALGCLRPTIEPRATEHIAEMRDIIERLVAGGFAYVAEDHVLFSPAAMNAANKVLPRYGALANRSLDEMIAGARVDVAPYKKDATDFVLWKPSKPGEPSWPSPAGIAAEGRPGWHIECSAMSWKHLGETFDIHGGGIDLVFPHHENEVAQSCCAFHTARMANVWMHNGFLQVEGEKMSKSLGNFVTIREVLADWPGEVVRLNMLKTHYRSPIDWTLRGLEESAKAVDDWYRTAGDLREGRPADAVIEALRDDINTPLMVAVLHGLRNEAASGGVDDVARFVGSLRLLGFLAEDAAQWRARKQQASGVDAAKVEGLIAERTAARARKDFKESDRLRDELAAMGVVLKDGKGADGKPVTTWEMAR.

Cysteine 29 serves as a coordination point for Zn(2+). Residues 31–41 carry the 'HIGH' region motif; that stretch reads PTVYDFAHIGN. Zn(2+) is bound by residues cysteine 227, histidine 252, and glutamate 256. The short motif at 285–289 is the 'KMSKS' region element; that stretch reads KMSKS. Lysine 288 provides a ligand contact to ATP.

This sequence belongs to the class-I aminoacyl-tRNA synthetase family. As to quaternary structure, monomer. Zn(2+) serves as cofactor.

Its subcellular location is the cytoplasm. It carries out the reaction tRNA(Cys) + L-cysteine + ATP = L-cysteinyl-tRNA(Cys) + AMP + diphosphate. The sequence is that of Cysteine--tRNA ligase from Bradyrhizobium sp. (strain BTAi1 / ATCC BAA-1182).